A 121-amino-acid chain; its full sequence is Large ribosomal subunit protein uL14 (121 aa).

The protein belongs to the universal ribosomal protein uL14 family. As to quaternary structure, part of the 50S ribosomal subunit. Forms a cluster with proteins L3 and L19. In the 70S ribosome, L14 and L19 interact and together make contacts with the 16S rRNA in bridges B5 and B8.

In terms of biological role, binds to 23S rRNA. Forms part of two intersubunit bridges in the 70S ribosome. The protein is Large ribosomal subunit protein uL14 of Prochlorococcus marinus (strain MIT 9301).